A 491-amino-acid polypeptide reads, in one-letter code: ATP-dependent protease ATPase subunit HslU (491 aa).

Residues I34, 76-81, D296, E364, and R436 each bind ATP; that span reads GVGKTE.

The protein belongs to the ClpX chaperone family. HslU subfamily. A double ring-shaped homohexamer of HslV is capped on each side by a ring-shaped HslU homohexamer. The assembly of the HslU/HslV complex is dependent on binding of ATP.

It is found in the cytoplasm. ATPase subunit of a proteasome-like degradation complex; this subunit has chaperone activity. The binding of ATP and its subsequent hydrolysis by HslU are essential for unfolding of protein substrates subsequently hydrolyzed by HslV. HslU recognizes the N-terminal part of its protein substrates and unfolds these before they are guided to HslV for hydrolysis. The chain is ATP-dependent protease ATPase subunit HslU from Chlorobaculum tepidum (strain ATCC 49652 / DSM 12025 / NBRC 103806 / TLS) (Chlorobium tepidum).